The primary structure comprises 261 residues: Claudin-18 (261 aa).

Topologically, residues 1-6 are cytoplasmic; that stretch reads MSTTRC. Residues 7-27 form a helical membrane-spanning segment; it reads QVVGFLLSILGLAGCIVATEM. Residues 28–80 lie on the Extracellular side of the membrane; it reads DMWSTQDLYDNPVTAVFQYEGLWRSCVQQSSGFTECRPYLTILGLPAMLQAVR. The helical transmembrane segment at 81–101 threads the bilayer; sequence ALMIVGIVLSVIGLLVAIFAL. Topologically, residues 102–122 are cytoplasmic; that stretch reads KCIRMGNMDDSAKAKMTLTSG. Residues 123–143 traverse the membrane as a helical segment; it reads IMFIIAGLCAIAGVSVFANML. At 144-174 the chain is on the extracellular side; the sequence is VTNFWMSTASMFTSMGGMVQTVQTRYTFGAA. The helical transmembrane segment at 175–195 threads the bilayer; it reads LFVGWVAGGLTLIGGVLMCIA. A required for role in regulation of RANKL-induced osteoclast differentiation region spans residues 195–261; the sequence is ACRGLAPEET…QSPPSKYDYV (67 aa). Over 196–261 the chain is Cytoplasmic; the sequence is CRGLAPEETN…QSPPSKYDYV (66 aa). Serine 214 bears the Phosphoserine mark. A disordered region spans residues 228-261; sequence SSGFESNTRNKKIYDGGARTEDEGQSPPSKYDYV. The segment covering 239-249 has biased composition (basic and acidic residues); it reads KIYDGGARTED.

It belongs to the claudin family. In terms of assembly, interacts with TJP2/ZO-2. Interacts with TJP1/ZO-1. Interacts with YAP1 (phosphorylated); the interaction sequesters YAP1 away from the nucleus and thereby restricts transcription of YAP1 target genes. Interacts with CLDN19.

It localises to the cell junction. The protein resides in the tight junction. It is found in the cell membrane. In terms of biological role, involved in alveolar fluid homeostasis via regulation of alveolar epithelial tight junction composition and therefore ion transport and solute permeability, potentially via downstream regulation of the actin cytoskeleton organization and beta-2-adrenergic signaling. Required for lung alveolarization and maintenance of the paracellular alveolar epithelial barrier. Acts to maintain epithelial progenitor cell proliferation and organ size, via regulation of YAP1 localization away from the nucleus and thereby restriction of YAP1 target gene transcription. Acts as a negative regulator of RANKL-induced osteoclast differentiation, potentially via relocation of TJP2/ZO-2 away from the nucleus, subsequently involved in bone resorption in response to calcium deficiency. Mediates the osteoprotective effects of estrogen, potentially via acting downstream of estrogen signaling independently of RANKL signaling pathways. This is Claudin-18 (CLDN18) from Bos taurus (Bovine).